The following is a 304-amino-acid chain: Putative HTH-type transcriptional regulatory protein Memar_2347 (304 aa).

The region spanning 132–189 (LREVRERFRMSLGDLASHLGVSRRTISKYESGMGTTLDVAIKLEEIFNAPLVETIELL) is the HTH cro/C1-type domain. Positions 143–162 (LGDLASHLGVSRRTISKYES) form a DNA-binding region, H-T-H motif.

This chain is Putative HTH-type transcriptional regulatory protein Memar_2347, found in Methanoculleus marisnigri (strain ATCC 35101 / DSM 1498 / JR1).